The following is a 206-amino-acid chain: Putative cryptic phosphonate transport system permease protein PhnE1 (206 aa).

3 consecutive transmembrane segments (helical) span residues 30–50 (WFSLLSWAVVLAVLVVSWQGA), 92–112 (IAVWGTALAVVLSIPFGLMSA), and 137–157 (MVFAMLFVVAVGLGPFAGVLA).

In terms of assembly, if the reading frame is restored, the complex is composed of two ATP-binding proteins (PhnC), two transmembrane proteins (PhnE) and a solute-binding protein (PhnD).

It localises to the cell inner membrane. In terms of biological role, N-terminal fragment of the PhnE protein, part of a phosphonate usage operon that is cryptic in K12 strains. Growth of K12 strains on phosphonate can be observed when it is used as the sole phosphorus source after a 60 hour lag period, suggesting the operon is activated. An intact PhnE in strain B is (AC A0A140NFA3). Part of the binding-protein-dependent transport system for phosphonates; probably responsible for the translocation of the substrate across the membrane. The sequence is that of Putative cryptic phosphonate transport system permease protein PhnE1 (phnE1) from Escherichia coli (strain K12).